Here is a 200-residue protein sequence, read N- to C-terminus: Endoribonuclease YbeY (200 aa).

Residues His-120, His-124, and His-130 each coordinate Zn(2+).

The protein belongs to the endoribonuclease YbeY family. Zn(2+) serves as cofactor.

It localises to the cytoplasm. Functionally, single strand-specific metallo-endoribonuclease involved in late-stage 70S ribosome quality control and in maturation of the 3' terminus of the 16S rRNA. This is Endoribonuclease YbeY from Corynebacterium efficiens (strain DSM 44549 / YS-314 / AJ 12310 / JCM 11189 / NBRC 100395).